The sequence spans 512 residues: Cytochrome P450 77A4 (512 aa).

The helical transmembrane segment at P9–T29 threads the bilayer. Residue C456 participates in heme binding.

Belongs to the cytochrome P450 family. It depends on heme as a cofactor.

It localises to the membrane. Catalyzes the epoxidation of physiological unsaturated fatty acids in vitro. Can use laurate, oleate, linoleate, linolenate and vernolate as substrate. The sequence is that of Cytochrome P450 77A4 (CYP77A4) from Arabidopsis thaliana (Mouse-ear cress).